Reading from the N-terminus, the 95-residue chain is MSIDESTAAKVAKLARIKVEDDALPALANEFNAILGFIEQLEEVDVEGVDPMVSVTPMALPRREDVVTDGDQQTRVLTNAPDAREGFFSVPKVVE.

Belongs to the GatC family. In terms of assembly, heterotrimer of A, B and C subunits.

The catalysed reaction is L-glutamyl-tRNA(Gln) + L-glutamine + ATP + H2O = L-glutaminyl-tRNA(Gln) + L-glutamate + ADP + phosphate + H(+). The enzyme catalyses L-aspartyl-tRNA(Asn) + L-glutamine + ATP + H2O = L-asparaginyl-tRNA(Asn) + L-glutamate + ADP + phosphate + 2 H(+). In terms of biological role, allows the formation of correctly charged Asn-tRNA(Asn) or Gln-tRNA(Gln) through the transamidation of misacylated Asp-tRNA(Asn) or Glu-tRNA(Gln) in organisms which lack either or both of asparaginyl-tRNA or glutaminyl-tRNA synthetases. The reaction takes place in the presence of glutamine and ATP through an activated phospho-Asp-tRNA(Asn) or phospho-Glu-tRNA(Gln). The protein is Aspartyl/glutamyl-tRNA(Asn/Gln) amidotransferase subunit C of Jannaschia sp. (strain CCS1).